A 3011-amino-acid polypeptide reads, in one-letter code: Genome polyprotein (3011 aa).

S2 carries the post-translational modification N-acetylserine; by host. Residues S2 to K23 form an interaction with STAT1 region. An interaction with EIF2AK2/PKR region spans residues S2 to P58. The tract at residues S2–R59 is interaction with DDX3X. The interval S2 to S75 is disordered. At S2–N168 the chain is on the cytoplasmic side. 2 short sequence motifs (nuclear localization signal) span residues P5–R13 and P38–R43. The span at P7 to N16 shows a compositional bias: basic residues. Phosphoserine; by host is present on S53. 2 consecutive short sequence motifs (nuclear localization signal) follow at residues P58–P64 and P66–P71. Positions P58–A68 are enriched in basic residues. The residue at position 99 (S99) is a Phosphoserine; by host. The important for endoplasmic reticulum and mitochondrial localization stretch occupies residues P112–A152. A Phosphoserine; by host PKA modification is found at S116. The interval V122 to S173 is interaction with APOA2. The interval Y164–G167 is important for lipid droplets localization. The chain crosses the membrane as a helical span at residues L169 to A189. A propeptide spans L178 to A191 (ER anchor for the core protein, removed in mature form by host signal peptidase). Residues S190–G358 are Lumenal-facing. N-linked (GlcNAc...) asparagine; by host glycosylation is found at N196, N209, and N234. An important for fusion region spans residues I265–R296. Residue N305 is glycosylated (N-linked (GlcNAc...) asparagine; by host). Residues L359 to A379 form a helical membrane-spanning segment. Residues G380 to L725 lie on the Lumenal side of the membrane. Residues T385–I411 form an HVR1 region. N-linked (GlcNAc...) (high mannose) asparagine; by host glycosylation is found at N417, N423, N430, and N448. 4 disulfide bridges follow: C429–C552, C452–C459, C486–C494, and C503–C508. The HVR2 stretch occupies residues H474–S479. Residues D480 to P493 are CD81-binding 1. A glycan (N-linked (GlcNAc...) (high mannose) asparagine; by host) is linked at N532. N-linked (GlcNAc...) asparagine; by host glycosylation occurs at N540. The interval P544–G551 is CD81-binding 2. N556 is a glycosylation site (N-linked (GlcNAc...) (high mannose) asparagine; by host). An intrachain disulfide couples C564 to C569. An N-linked (GlcNAc...) (high mannose) asparagine; by host glycan is attached at N576. Cystine bridges form between C581–C585, C597–C620, and C607–C644. Residues N623 and N645 are each glycosylated (N-linked (GlcNAc...) (high mannose) asparagine; by host). Cysteines 652 and 677 form a disulfide. Residues A660 to Q671 are PKR/eIF2-alpha phosphorylation homology domain (PePHD). A helical membrane pass occupies residues L726–A746. Topologically, residues A747–A757 are lumenal. The chain crosses the membrane as a helical span at residues S758–L778. The Cytoplasmic segment spans residues K779 to K781. A helical transmembrane segment spans residues W782–L803. Over P804–E813 the chain is Lumenal. A helical transmembrane segment spans residues L814–Y834. Over Y835–Y838 the chain is Cytoplasmic. A helical membrane pass occupies residues M839 to V859. Residues W860–H881 lie on the Lumenal side of the membrane. A helical membrane pass occupies residues P882–L902. The Peptidase C18 domain maps to Q903 to L1026. The Cytoplasmic portion of the chain corresponds to Q903–T1657. The segment at A904–R1206 is protease NS2-3. The S-palmitoyl cysteine; by host moiety is linked to residue C922. The segment at A929–I949 is interaction with host SCPS1. Active-site for protease NS2 activity; shared with dimeric partner residues include H952, E972, and C993. In terms of domain architecture, Peptidase S29 spans A1027–P1208. Residues H1083 and D1107 each act as charge relay system; for serine protease NS3 activity in the active site. Zn(2+)-binding residues include C1123 and C1125. Catalysis depends on S1165, which acts as the Charge relay system; for serine protease NS3 activity. The Zn(2+) site is built by C1171 and H1175. Positions P1217 to T1369 constitute a Helicase ATP-binding domain. A1230 to S1237 contributes to the ATP binding site. Mg(2+)-binding residues include S1237 and E1317. A DECH box motif is present at residues D1316–H1319. Positions Q1486 to G1497 are RNA-binding. The helical transmembrane segment at S1658–G1678 threads the bilayer. Residues S1679–G1690 form an NS3-binding region. Residues S1679–Q1805 lie on the Cytoplasmic side of the membrane. Residues T1806–A1824 traverse the membrane as a helical segment. The Lumenal portion of the chain corresponds to A1825–A1828. Residues F1829–V1849 form a helical membrane-spanning segment. Position 1850 (D1850) is a topological domain, cytoplasmic. The helical transmembrane segment at I1851–G1871 threads the bilayer. The Lumenal segment spans residues E1872 to N1881. A helical transmembrane segment spans residues L1882–L1902. Over R1903–C1972 the chain is Cytoplasmic. Residues C1968 and C1972 are each lipidated (S-palmitoyl cysteine; by host). An intramembrane segment occupies A1973–Q2002. Over L2003 to R2990 the chain is Cytoplasmic. Residues C2011, C2029, C2031, and C2052 each coordinate Zn(2+). The tract at residues E2120 to A2208 is FKBP8-binding. Positions E2120–T2332 are transcriptional activation. Residues P2135–P2139 are interaction with non-structural protein 4A. Positions R2189–L2441 are interaction with host SKP2. S2194 carries the post-translational modification Phosphoserine; by host; in p56. S2197, S2201, S2204, S2207, and S2210 each carry phosphoserine; by host; in p58. The tract at residues S2210–K2249 is ISDR. Positions S2210–L2275 are interaction with EIF2AK2/PKR. An NS4B-binding region spans residues K2249–Y2306. The SH3-binding signature appears at T2322–P2325. Residues P2326 to V2334 carry the Nuclear localization signal motif. A Glycyl lysine isopeptide (Lys-Gly) (interchain with G-Cter in ubiquitin) cross-link involves residue K2350. A compositionally biased stretch (low complexity) spans F2352–S2373. The tract at residues F2352 to S2409 is disordered. Residues S2354–E2377 form a V3 region. Residues S2449 and S2462 each carry the phosphoserine; by host modification. A RdRp catalytic domain is found at P2634 to D2752. 3 residues coordinate Mg(2+): D2640, D2738, and D2739. The chain crosses the membrane as a helical span at residues W2991–R3011.

This sequence belongs to the hepacivirus polyprotein family. As to quaternary structure, homooligomer. Interacts with E1 (via C-terminus). Interacts with the non-structural protein 5A. Interacts (via N-terminus) with host STAT1 (via SH2 domain); this interaction results in decreased STAT1 phosphorylation and ubiquitin-mediated proteasome-dependent STAT1 degradation, leading to decreased IFN-stimulated gene transcription. Interacts with host STAT3; this interaction constitutively activates STAT3. Interacts with host LTBR receptor. Interacts with host TNFRSF1A receptor and possibly induces apoptosis. Interacts with host HNRPK. Interacts with host YWHAE. Interacts with host UBE3A/E6AP. Interacts with host DDX3X. Interacts with host APOA2. Interacts with host RXRA protein. Interacts with host SP110 isoform 3/Sp110b; this interaction sequesters the transcriptional corepressor SP110 away from the nucleus. Interacts with host CREB3 nuclear transcription protein; this interaction triggers cell transformation. Interacts with host ACY3. Interacts with host C1QR1. Interacts with host RBM24; this interaction, which enhances the interaction of the mature core protein with 5'-UTR, may inhibit viral translation and favor replication. Interacts with host EIF2AK2/PKR; this interaction induces the autophosphorylation of EIF2AK2. Part of the viral assembly initiation complex composed of NS2, E1, E2, NS3, NS4A, NS5A and the mature core protein. In terms of assembly, forms a heterodimer with envelope glycoprotein E2. Interacts with mature core protein. Interacts with protease NS2. The heterodimer E1/E2 interacts with host CLDN1; this interaction plays a role in viral entry into host cell. Interacts with host SPSB2 (via C-terminus). Part of the viral assembly initiation complex composed of NS2, E1, E2, NS3, NS4A, NS5A and the mature core protein. Interacts with host NEURL3; this interaction prevents E1 binding to glycoprotein E2. Forms a heterodimer with envelope glycoprotein E1. Interacts with host CD81 and SCARB1 receptors; these interactions play a role in viral entry into host cell. Interacts with host EIF2AK2/PKR; this interaction inhibits EIF2AK2 and probably allows the virus to evade the innate immune response. Interacts with host CD209/DC-SIGN and CLEC4M/DC-SIGNR. Interact with host SPCS1; this interaction is essential for viral particle assembly. Interacts with protease NS2. The heterodimer E1/E2 interacts with host CLDN1; this interaction plays a role in viral entry into host cell. Part of the viral assembly initiation complex composed of NS2, E1, E2, NS3, NS4A, NS5A and the mature core protein. Interacts with host SLC3A2/4F2hc; the interaction may facilitate viral entry into host cell. Interacts with human PLSCR1. As to quaternary structure, homohexamer. Homoheptamer. Interacts with protease NS2. In terms of assembly, homodimer. Interacts with host SPCS1; this interaction is essential for viral particle assembly. Interacts with envelope glycoprotein E1. Interacts with envelope glycoprotein E2. Interacts with viroporin p7. Interacts with serine protease/helicase NS3. Part of the replication complex composed of NS2, NS3, NS4A, NS4B, NS5A and the RNA-directed RNA polymerase embedded in an ER-derived membranous web. Part of the viral assembly initiation complex composed of NS2, E1, E2, NS3, NS4A, NS5A and the mature core protein. Interacts with protease NS2. Interacts with non-structural protein 4A; this interaction stabilizes the folding of NS3 serine protease. NS3-NS4A interaction is essential for NS3 activation and allows membrane anchorage of the latter. NS3/NS4A complex also prevents phosphorylation of host IRF3, thus preventing the establishment of dsRNA induced antiviral state. Interacts with host MAVS; this interaction leads to the cleavage and inhibition of host MAVS. Interacts with host TICAM1; this interaction leads to the cleavage and inhibition of host TICAM1. Interacts with host TANK-binding kinase/TBK1; this interaction results in the inhibition of the association between TBK1 and IRF3, which leads to the inhibition of IRF3 activation. Interacts with host RBM24. Part of the replication complex composed of NS2, NS3, NS4A, NS4B, NS5A and the RNA-directed RNA polymerase embedded in an ER-derived membranous web. Part of the viral assembly initiation complex composed of NS2, E1, E2, NS3, NS4A, NS5A and the mature core protein. As to quaternary structure, interacts with NS3 serine protease; this interaction stabilizes the folding of NS3 serine protease. NS3-NS4A interaction is essential for NS3 activation and allows membrane anchorage of the latter. Interacts with non-structural protein 5A (via N-terminus). Part of the replication complex composed of NS2, NS3, NS4A, NS4B, NS5A and the RNA-directed RNA polymerase embedded in an ER-derived membranous web. Part of the viral assembly initiation complex composed of NS2, E1, E2, NS3, NS4A, NS5A and the mature core protein. In terms of assembly, homomultimer. Interacts with non-structural protein NS5A. Interacts with host PLA2G4C; this interaction likely initiates the recruitment of replication complexes to lipid droplets. Interacts with host STING; this interaction disrupts the interaction between STING and TBK1 thereby suppressing the interferon signaling. Part of the replication complex composed of NS2, NS3, NS4A, NS4B, NS5A and the RNA-directed RNA polymerase embedded in an ER-derived membranous web. Monomer. Homodimer; dimerization is required for RNA-binding. Interacts with the mature core protein. Interacts (via N-terminus) with non-structural protein 4A. Interacts with non-structural protein 4B. Interacts (via region D2) with RNA-directed RNA polymerase. Part of the viral assembly initiation complex composed of NS2, E1, E2, NS3, NS4A, NS5A and the mature core protein. Part of the replication complex composed of NS2, NS3, NS4A, NS4B, NS5A and the RNA-directed RNA polymerase embedded in an ER-derived membranous web. Interacts with host GRB2. Interacts with host BIN1. Interacts with host PIK3R1. Interacts with host SRCAP. Interacts with host FKBP8. Interacts (via C-terminus) with host VAPB (via MSP domain). Interacts with host EIF2AK2/PKR; this interaction leads to disruption of EIF2AK2 dimerization by NS5A and probably allows the virus to evade the innate immune response. Interacts (via N-terminus) with host PACSIN2 (via N-terminus); this interaction attenuates protein kinase C alpha-mediated phosphorylation of PACSIN2 by disrupting the interaction between PACSIN2 and PRKCA. Interacts (via N-terminus) with host SRC kinase (via SH2 domain). Interacts with most Src-family kinases. Interacts with host IFI27 and SKP2; promotes the ubiquitin-mediated proteasomal degradation of NS5A. Interacts with host GPS2. Interacts with host TNFRSF21; this interaction allows the modulation by the virus of JNK, p38 MAPK, STAT3, and Akt signaling pathways in a DR6-dependent manner. Interacts (via N-terminus) with host CIDEB (via N-terminus); this interaction seems to regulate the association of HCV particles with APOE. Interacts with host CHKA/Choline Kinase-alpha; CHKA bridges host PI4KA and NS5A and potentiates NS5A-stimulated PI4KA activity, which then facilitates the targeting of the ternary complex to the ER for viral replication. Interacts with host SPSB2 (via C-terminus); this interaction targets NS5A for ubiquitination and degradation. Interacts with host RAB18; this interaction may promote the association of NS5A and other replicase components with lipid droplets. Interacts (via region D2) with host PPIA/CYPA; the interaction stimulates RNA-binding ability of NS5A and is dependent on the peptidyl-prolyl cis-trans isomerase activity of PPIA/CYPA. Interacts with host TRIM14; this interaction induces the degradation of NS5A. As to quaternary structure, homooligomer. Interacts with non-structural protein 5A. Interacts with host VAPB. Interacts with host PRK2/PKN2. Interacts with host HNRNPA1 and SEPT6; these interactions facilitate viral replication. Part of the replication complex composed of NS2, NS3, NS4A, NS4B, NS5A and the RNA-directed RNA polymerase. It depends on Zn(2+) as a cofactor. The cofactor is Mg(2+). Specific enzymatic cleavages in vivo yield mature proteins. The structural proteins, core, E1, E2 and p7 are produced by proteolytic processing by host signal peptidases. The core protein precursor is synthesized as a 23 kDa, which is retained in the ER membrane through the hydrophobic signal peptide. Cleavage by the signal peptidase releases the 21 kDa mature core protein. The cleavage of the core protein precursor occurs between aminoacids 176 and 188 but the exact cleavage site is not known. Some degraded forms of the core protein appear as well during the course of infection. The other proteins (p7, NS2, NS3, NS4A, NS4B, NS5A and NS5B) are cleaved by the viral proteases. Autoprocessing between NS2 and NS3 is mediated by the NS2 cysteine protease catalytic domain and regulated by the NS3 N-terminal domain. Post-translationally, phosphorylated by host PKC and PKA. In terms of processing, ubiquitinated; mediated by UBE3A and leading to core protein subsequent proteasomal degradation. Highly N-glycosylated. Post-translationally, palmitoylation is required for NS2/3 autoprocessing and E2 recruitment to membranes. In terms of processing, palmitoylated. This modification may play a role in its polymerization or in protein-protein interactions. Phosphorylated on serines in a basal form termed p56. p58 is a hyperphosphorylated form of p56. p56 and p58 coexist in the cell in roughly equivalent amounts. Hyperphosphorylation is dependent on the presence of NS4A. Host CSNK1A1/CKI-alpha or RPS6KB1 kinases may be responsible for NS5A phosphorylation. Post-translationally, tyrosine phosphorylation is essential for the interaction with host SRC. In terms of processing, the N-terminus is phosphorylated by host PRK2/PKN2.

Its subcellular location is the host endoplasmic reticulum membrane. It localises to the host mitochondrion membrane. It is found in the virion. The protein resides in the host cytoplasm. The protein localises to the host nucleus. Its subcellular location is the host lipid droplet. It localises to the virion membrane. It is found in the host mitochondrion. The protein resides in the host cell membrane. The protein localises to the host perinuclear region. It carries out the reaction Hydrolysis of four peptide bonds in the viral precursor polyprotein, commonly with Asp or Glu in the P6 position, Cys or Thr in P1 and Ser or Ala in P1'.. It catalyses the reaction a ribonucleoside 5'-triphosphate + H2O = a ribonucleoside 5'-diphosphate + phosphate + H(+). The catalysed reaction is ATP + H2O = ADP + phosphate + H(+). The enzyme catalyses RNA(n) + a ribonucleoside 5'-triphosphate = RNA(n+1) + diphosphate. With respect to regulation, inhibited by the antiviral drug hexamethylene amiloride. Inhibition by amantadine appears to be genotype-dependent. Also inhibited by long-alkyl-chain iminosugar derivatives. Its activity is regulated as follows. Activity is up-regulated by PRK2/PKN2-mediated phosphorylation. Its function is as follows. Packages viral RNA to form a viral nucleocapsid, and promotes virion budding. Participates in the viral particle production as a result of its interaction with the non-structural protein 5A. Binds RNA and may function as a RNA chaperone to induce the RNA structural rearrangements taking place during virus replication. Modulates viral translation initiation by interacting with viral IRES and 40S ribosomal subunit. Affects various cell signaling pathways, host immunity and lipid metabolism. Prevents the establishment of cellular antiviral state by blocking the interferon-alpha/beta (IFN-alpha/beta) and IFN-gamma signaling pathways and by blocking the formation of phosphorylated STAT1 and promoting ubiquitin-mediated proteasome-dependent degradation of STAT1. Activates STAT3 leading to cellular transformation. Regulates the activity of cellular genes, including c-myc and c-fos. May repress the promoter of p53, and sequester CREB3 and SP110 isoform 3/Sp110b in the cytoplasm. Represses cell cycle negative regulating factor CDKN1A, thereby interrupting an important check point of normal cell cycle regulation. Targets transcription factors involved in the regulation of inflammatory responses and in the immune response: suppresses TNF-induced NF-kappa-B activation, and activates AP-1. Binds to dendritic cells (DCs) via C1QR1, resulting in down-regulation of T-lymphocytes proliferation. Alters lipid metabolism by interacting with hepatocellular proteins involved in lipid accumulation and storage. Induces up-regulation of FAS promoter activity, and thereby contributes to the increased triglyceride accumulation in hepatocytes (steatosis). Functionally, forms a heterodimer with envelope glycoprotein E2, which mediates virus attachment to the host cell, virion internalization through clathrin-dependent endocytosis and fusion with host membrane. Fusion with the host cell is most likely mediated by both E1 and E2, through conformational rearrangements of the heterodimer required for fusion rather than a classical class II fusion mechanism. E1/E2 heterodimer binds host apolipoproteins such as APOB and ApoE thereby forming a lipo-viro-particle (LVP). APOE associated to the LVP allows the initial virus attachment to cell surface receptors such as the heparan sulfate proteoglycans (HSPGs), syndecan-1 (SDC1), syndecan-1 (SDC2), the low-density lipoprotein receptor (LDLR) and scavenger receptor class B type I (SCARB1). The cholesterol transfer activity of SCARB1 allows E2 exposure and binding of E2 to SCARB1 and the tetraspanin CD81. E1/E2 heterodimer binding on CD81 activates the epithelial growth factor receptor (EGFR) signaling pathway. Diffusion of the complex E1-E2-EGFR-SCARB1-CD81 to the cell lateral membrane allows further interaction with Claudin 1 (CLDN1) and occludin (OCLN) to finally trigger HCV entry. Forms a heterodimer with envelope glycoprotein E1, which mediates virus attachment to the host cell, virion internalization through clathrin-dependent endocytosis and fusion with host membrane. Fusion with the host cell is most likely mediated by both E1 and E2, through conformational rearrangements of the heterodimer required for fusion rather than a classical class II fusion mechanism. The interaction between envelope glycoprotein E2 and host apolipoprotein E/APOE allows the proper assembly, maturation and infectivity of the viral particles. This interaction is probably promoted via the up-regulation of cellular autophagy by the virus. E1/E2 heterodimer binds host apolipoproteins such as APOB and APOE thereby forming a lipo-viro-particle (LVP). APOE associated to the LVP allows the initial virus attachment to cell surface receptors such as the heparan sulfate proteoglycans (HSPGs), syndecan-1 (SDC1), syndecan-1 (SDC2), the low-density lipoprotein receptor (LDLR) and scavenger receptor class B type I (SCARB1). The cholesterol transfer activity of SCARB1 allows E2 exposure and binding of E2 to SCARB1 and the tetraspanin CD81. E1/E2 heterodimer binding on CD81 activates the epithelial growth factor receptor (EGFR) signaling pathway. Diffusion of the complex E1-E2-EGFR-SCARB1-CD81 to the cell lateral membrane allows further interaction with Claudin 1 (CLDN1) and occludin (OCLN) to finally trigger HCV entry. Inhibits host EIF2AK2/PKR activation, preventing the establishment of an antiviral state. Viral ligand for CD209/DC-SIGN and CLEC4M/DC-SIGNR, which are respectively found on dendritic cells (DCs), and on liver sinusoidal endothelial cells and macrophage-like cells of lymph node sinuses. These interactions allow the capture of circulating HCV particles by these cells and subsequent facilitated transmission to permissive cells such as hepatocytes and lymphocyte subpopulations. The interaction between E2 and host amino acid transporter complex formed by SLC3A2 and SLC7A5/LAT1 may facilitate viral entry into host cell. In terms of biological role, ion channel protein that acts as a viroporin and plays an essential role in the assembly, envelopment and secretion of viral particles. Regulates the host cell secretory pathway, which induces the intracellular retention of viral glycoproteins and favors assembly of viral particles. Creates a pore in acidic organelles and releases Ca(2+) and H(+) in the cytoplasm of infected cells, leading to a productive viral infection. High levels of cytoplasmic Ca(2+) may trigger membrane trafficking and transport of viral ER-associated proteins to viroplasms, sites of viral genome replication. This ionic imbalance induces the assembly of the inflammasome complex, which triggers the maturation of pro-IL-1beta into IL-1beta through the action of caspase-1. Targets also host mitochondria and induces mitochondrial depolarization. In addition of its role as a viroporin, acts as a lipid raft adhesion factor. Its function is as follows. Cysteine protease required for the proteolytic auto-cleavage between the non-structural proteins NS2 and NS3. The N-terminus of NS3 is required for the function of NS2 protease (active region NS2-3). Promotes the initiation of viral particle assembly by mediating the interaction between structural and non-structural proteins. Functionally, displays three enzymatic activities: serine protease with a chymotrypsin-like fold, NTPase and RNA helicase. NS3 serine protease, in association with NS4A, is responsible for the cleavages of NS3-NS4A, NS4A-NS4B, NS4B-NS5A and NS5A-NS5B. The NS3/NS4A complex prevents phosphorylation of host IRF3, thus preventing the establishment of dsRNA induced antiviral state. The NS3/NS4A complex induces host amino acid transporter component SLC3A2, thus contributing to HCV propagation. NS3 RNA helicase binds to RNA and unwinds both dsDNA and dsRNA in the 3' to 5' direction, and likely resolves RNA complicated stable secondary structures in the template strand. Binds a single ATP and catalyzes the unzipping of a single base pair of dsRNA. Inhibits host antiviral proteins TBK1 and IRF3 thereby preventing the establishment of an antiviral state. Cleaves host MAVS/CARDIF thereby preventing the establishment of an antiviral state. Cleaves host TICAM1/TRIF, thereby disrupting TLR3 signaling and preventing the establishment of an antiviral state. Induces a specific membrane alteration that serves as a scaffold for the virus replication complex. This membrane alteration gives rise to the so-called ER-derived membranous web that contains the replication complex. NS4B self-interaction contributes to its function in membranous web formation. Promotes host TRIF protein degradation in a CASP8-dependent manner thereby inhibiting host TLR3-mediated interferon signaling. Disrupts the interaction between STING and TBK1 contributing to the inhibition of interferon signaling. In terms of biological role, phosphorylated protein that is indispensable for viral replication and assembly. Both hypo- and hyperphosphorylated states are required for the viral life cycle. The hyperphosphorylated form of NS5A is an inhibitor of viral replication. Involved in RNA-binding and especially in binding to the viral genome. Zinc is essential for RNA-binding. Participates in the viral particle production as a result of its interaction with the mature viral core protein. Its interaction with host VAPB may target the viral replication complex to vesicles. Down-regulates viral IRES translation initiation. Mediates interferon resistance, presumably by interacting with and inhibiting host EIF2AK2/PKR. Prevents BIN1-induced apoptosis. Acts as a transcriptional activator of some host genes important for viral replication when localized in the nucleus. Via the interaction with host PACSIN2, modulates lipid droplet formation in order to promote virion assembly. Modulates TNFRSF21/DR6 signaling pathway for viral propagation. Its function is as follows. RNA-dependent RNA polymerase that performs primer-template recognition and RNA synthesis during viral replication. Initiates RNA transcription/replication at a flavin adenine dinucleotide (FAD), resulting in a 5'- FAD cap on viral RNAs. In this way, recognition of viral 5' RNA by host pattern recognition receptors can be bypassed, thereby evading activation of antiviral pathways. This chain is Genome polyprotein, found in Homo sapiens (Human).